The following is a 425-amino-acid chain: Histone-binding protein RBBP7 (425 aa).

WD repeat units follow at residues 47–122 (QWLP…KINH), 128–173 (RARY…LRLR), 181–217 (GLSWNSNLSGHLLSASDDHTVCLWDISAGPKEGKVVD), 228–269 (VVED…HSVD), 275–312 (VNCLSFNPYSEFILATGSADKTVALWDLRNLKLKLHSF), 318–369 (EIFQ…LFIH), and 376–403 (ISDFSWNPNEPWVICSVSEDNIMQIWQM).

It belongs to the WD repeat RBAP46/RBAP48/MSI1 family. Binds directly to helix 1 of the histone fold of histone H4, a region that is not accessible when H4 is in chromatin.

The protein resides in the nucleus. Core histone-binding subunit that may target chromatin remodeling factors, histone acetyltransferases and histone deacetylases to their histone substrates in a manner that is regulated by nucleosomal DNA. Component of several complexes which regulate chromatin metabolism. The polypeptide is Histone-binding protein RBBP7 (rbbp7) (Xenopus tropicalis (Western clawed frog)).